The chain runs to 190 residues: Heme-binding protein 1 (190 aa).

Belongs to the HEBP family. Monomer.

The protein localises to the cytoplasm. May bind free porphyrinogens that may be present in the cell and thus facilitate removal of these potentially toxic compound. Binds with a high affinity to one molecule of heme or porphyrins. It binds metalloporphyrins, free porphyrins and N-methylprotoporphyrin with similar affinities. The polypeptide is Heme-binding protein 1 (hebp1) (Xenopus laevis (African clawed frog)).